The following is a 547-amino-acid chain: Chaperonin GroEL (547 aa).

ATP is bound by residues 30–33 (TLGP), lysine 51, 87–91 (DGTTT), glycine 415, and aspartate 495.

The protein belongs to the chaperonin (HSP60) family. In terms of assembly, forms a cylinder of 14 subunits composed of two heptameric rings stacked back-to-back. Interacts with the co-chaperonin GroES.

The protein localises to the cytoplasm. The enzyme catalyses ATP + H2O + a folded polypeptide = ADP + phosphate + an unfolded polypeptide.. In terms of biological role, together with its co-chaperonin GroES, plays an essential role in assisting protein folding. The GroEL-GroES system forms a nano-cage that allows encapsulation of the non-native substrate proteins and provides a physical environment optimized to promote and accelerate protein folding. This chain is Chaperonin GroEL, found in Allorhizobium ampelinum (strain ATCC BAA-846 / DSM 112012 / S4) (Agrobacterium vitis (strain S4)).